The chain runs to 374 residues: Chaperone protein DnaJ (374 aa).

The region spanning 4 to 69 (SYYEILEITQ…EKRAIYDRYG (66 aa)) is the J domain. Residues 136-213 (GCKKNIDFTY…CKGLGYNESK (78 aa)) form a CR-type zinc finger. Positions 149, 152, 165, 168, 187, 190, 201, and 204 each coordinate Zn(2+). CXXCXGXG motif repeat units follow at residues 149 to 156 (CKTCNGTG), 165 to 172 (CPKCQGRG), 187 to 194 (CPDCQGSG), and 201 to 208 (CSDCKGLG).

This sequence belongs to the DnaJ family. Homodimer. Zn(2+) is required as a cofactor.

The protein resides in the cytoplasm. In terms of biological role, participates actively in the response to hyperosmotic and heat shock by preventing the aggregation of stress-denatured proteins and by disaggregating proteins, also in an autonomous, DnaK-independent fashion. Unfolded proteins bind initially to DnaJ; upon interaction with the DnaJ-bound protein, DnaK hydrolyzes its bound ATP, resulting in the formation of a stable complex. GrpE releases ADP from DnaK; ATP binding to DnaK triggers the release of the substrate protein, thus completing the reaction cycle. Several rounds of ATP-dependent interactions between DnaJ, DnaK and GrpE are required for fully efficient folding. Also involved, together with DnaK and GrpE, in the DNA replication of plasmids through activation of initiation proteins. The sequence is that of Chaperone protein DnaJ from Campylobacter jejuni subsp. jejuni serotype O:6 (strain 81116 / NCTC 11828).